Reading from the N-terminus, the 325-residue chain is Melanocortin receptor 5 (325 aa).

Residues M1–G37 are Extracellular-facing. N-linked (GlcNAc...) asparagine glycosylation is found at N2, N15, and N28. Residues I38–I61 form a helical membrane-spanning segment. Over V62–F73 the chain is Cytoplasmic. Residues F74 to Y97 traverse the membrane as a helical segment. The Extracellular segment spans residues L98 to I114. The helical transmembrane segment at D115–V138 threads the bilayer. The Cytoplasmic segment spans residues D139–T155. Residues A156 to I179 traverse the membrane as a helical segment. Residues Y180 to V186 lie on the Extracellular side of the membrane. A helical transmembrane segment spans residues I187–L211. At A212–T239 the chain is on the cytoplasmic side. Residues L240–P265 form a helical membrane-spanning segment. Residues Q266–F273 are Extracellular-facing. A helical membrane pass occupies residues M274–L297. The Cytoplasmic segment spans residues R298–Y325. Residues C311 and C312 are each lipidated (S-palmitoyl cysteine).

It belongs to the G-protein coupled receptor 1 family. In terms of tissue distribution, very low expression levels is detected in brain, while high levels are found in adrenals, stomach, lung and spleen.

The protein resides in the cell membrane. Its function is as follows. Receptor for MSH (alpha, beta and gamma) and ACTH. The activity of this receptor is mediated by G proteins which activate adenylate cyclase. This receptor is a possible mediator of the immunomodulation properties of melanocortins. The sequence is that of Melanocortin receptor 5 (Mc5r) from Rattus norvegicus (Rat).